A 510-amino-acid polypeptide reads, in one-letter code: Probable cytochrome P450 517A2 (510 aa).

Residues 1-21 traverse the membrane as a helical segment; the sequence is MRILIIIILIIIVFLVKDTIK. Residue Cys-450 coordinates heme.

The protein belongs to the cytochrome P450 family. Requires heme as cofactor.

Its subcellular location is the membrane. In Dictyostelium discoideum (Social amoeba), this protein is Probable cytochrome P450 517A2 (cyp517A2).